Here is a 35-residue protein sequence, read N- to C-terminus: Photosystem II reaction center protein M (35 aa).

An N-formylmethionine modification is found at methionine 1. Residues 7 to 28 (GFIASILFVLVPTVFLLILFIQ) form a helical membrane-spanning segment.

Belongs to the PsbM family. As to quaternary structure, PSII is composed of 1 copy each of membrane proteins PsbA, PsbB, PsbC, PsbD, PsbE, PsbF, PsbH, PsbI, PsbJ, PsbK, PsbL, PsbM, PsbT, PsbX, PsbY, PsbZ, Psb30/Ycf12, peripheral proteins PsbO, CyanoQ (PsbQ), PsbU, PsbV and a large number of cofactors. It forms dimeric complexes.

The protein localises to the cellular thylakoid membrane. Its function is as follows. One of the components of the core complex of photosystem II (PSII). PSII is a light-driven water:plastoquinone oxidoreductase that uses light energy to abstract electrons from H(2)O, generating O(2) and a proton gradient subsequently used for ATP formation. It consists of a core antenna complex that captures photons, and an electron transfer chain that converts photonic excitation into a charge separation. This subunit is found at the monomer-monomer interface. Involved in assembly of monomeric PSII from the CP43-less intermediate. This is Photosystem II reaction center protein M from Synechocystis sp. (strain ATCC 27184 / PCC 6803 / Kazusa).